The sequence spans 375 residues: Queuine tRNA-ribosyltransferase (375 aa).

The active-site Proton acceptor is the Asp90. Residues 90-94, Asp144, Gln193, and Gly220 each bind substrate; that span reads DSGGF. An RNA binding region spans residues 251–257; it reads GVGTPED. The active-site Nucleophile is the Asp270. Residues 275 to 279 form an RNA binding; important for wobble base 34 recognition region; the sequence is TRNAR. 4 residues coordinate Zn(2+): Cys308, Cys310, Cys313, and His339.

Belongs to the queuine tRNA-ribosyltransferase family. As to quaternary structure, homodimer. Within each dimer, one monomer is responsible for RNA recognition and catalysis, while the other monomer binds to the replacement base PreQ1. Zn(2+) is required as a cofactor.

The enzyme catalyses 7-aminomethyl-7-carbaguanine + guanosine(34) in tRNA = 7-aminomethyl-7-carbaguanosine(34) in tRNA + guanine. The protein operates within tRNA modification; tRNA-queuosine biosynthesis. Catalyzes the base-exchange of a guanine (G) residue with the queuine precursor 7-aminomethyl-7-deazaguanine (PreQ1) at position 34 (anticodon wobble position) in tRNAs with GU(N) anticodons (tRNA-Asp, -Asn, -His and -Tyr). Catalysis occurs through a double-displacement mechanism. The nucleophile active site attacks the C1' of nucleotide 34 to detach the guanine base from the RNA, forming a covalent enzyme-RNA intermediate. The proton acceptor active site deprotonates the incoming PreQ1, allowing a nucleophilic attack on the C1' of the ribose to form the product. After dissociation, two additional enzymatic reactions on the tRNA convert PreQ1 to queuine (Q), resulting in the hypermodified nucleoside queuosine (7-(((4,5-cis-dihydroxy-2-cyclopenten-1-yl)amino)methyl)-7-deazaguanosine). This Janthinobacterium sp. (strain Marseille) (Minibacterium massiliensis) protein is Queuine tRNA-ribosyltransferase.